Consider the following 160-residue polypeptide: Transcription elongation factor GreA (160 aa).

A coiled-coil region spans residues 1–72 (MAEKTYPMTL…QISSLETKIR (72 aa)).

Belongs to the GreA/GreB family.

Its function is as follows. Necessary for efficient RNA polymerase transcription elongation past template-encoded arresting sites. The arresting sites in DNA have the property of trapping a certain fraction of elongating RNA polymerases that pass through, resulting in locked ternary complexes. Cleavage of the nascent transcript by cleavage factors such as GreA or GreB allows the resumption of elongation from the new 3'terminus. GreA releases sequences of 2 to 3 nucleotides. This chain is Transcription elongation factor GreA, found in Streptococcus gordonii (strain Challis / ATCC 35105 / BCRC 15272 / CH1 / DL1 / V288).